The following is a 160-amino-acid chain: MTKKKAYKPGSATIAQNKRARHEYFIEEEFEAGLALQGWEVKSLRAGKANLSDSYVTFMNGEAYLFGATITPLNVASSHVVCDPIRTRKLLLNKRELESLFGRVSREGYTVVALSMYWKNAWSKVKIGVAKGKKDHDKRDDIKEREWKLDKARIMKNANR.

Belongs to the SmpB family.

Its subcellular location is the cytoplasm. Functionally, required for rescue of stalled ribosomes mediated by trans-translation. Binds to transfer-messenger RNA (tmRNA), required for stable association of tmRNA with ribosomes. tmRNA and SmpB together mimic tRNA shape, replacing the anticodon stem-loop with SmpB. tmRNA is encoded by the ssrA gene; the 2 termini fold to resemble tRNA(Ala) and it encodes a 'tag peptide', a short internal open reading frame. During trans-translation Ala-aminoacylated tmRNA acts like a tRNA, entering the A-site of stalled ribosomes, displacing the stalled mRNA. The ribosome then switches to translate the ORF on the tmRNA; the nascent peptide is terminated with the 'tag peptide' encoded by the tmRNA and targeted for degradation. The ribosome is freed to recommence translation, which seems to be the essential function of trans-translation. The polypeptide is SsrA-binding protein (Pectobacterium carotovorum subsp. carotovorum (strain PC1)).